Here is a 536-residue protein sequence, read N- to C-terminus: ATPase expression protein 3 (536 aa).

2 PPR repeats span residues 212 to 246 and 386 to 421; these read TTTMFNDLIYYFGKKSDYASCREYYSQMKLEKKTP and TTGSVNILLNAAAEKGRLDLAVLTYNSMKVQLGVTP.

It is found in the mitochondrion inner membrane. In terms of biological role, required for respiration. The chain is ATPase expression protein 3 (AEP3) from Eremothecium gossypii (strain ATCC 10895 / CBS 109.51 / FGSC 9923 / NRRL Y-1056) (Yeast).